Consider the following 353-residue polypeptide: Uroporphyrinogen decarboxylase (353 aa).

Substrate is bound by residues 30–34, Asp-79, Tyr-154, Ser-209, and His-332; that span reads RQAGR.

Belongs to the uroporphyrinogen decarboxylase family. Homodimer.

It is found in the cytoplasm. The enzyme catalyses uroporphyrinogen III + 4 H(+) = coproporphyrinogen III + 4 CO2. The protein operates within porphyrin-containing compound metabolism; protoporphyrin-IX biosynthesis; coproporphyrinogen-III from 5-aminolevulinate: step 4/4. Its function is as follows. Catalyzes the decarboxylation of four acetate groups of uroporphyrinogen-III to yield coproporphyrinogen-III. This is Uroporphyrinogen decarboxylase from Mycobacterium ulcerans (strain Agy99).